The chain runs to 256 residues: Small ribosomal subunit protein eS1B (256 aa).

N-acetylalanine; partial is present on Ala-2.

The protein belongs to the eukaryotic ribosomal protein eS1 family. Component of the small ribosomal subunit. Mature ribosomes consist of a small (40S) and a large (60S) subunit. The 40S subunit contains about 33 different proteins and 1 molecule of RNA (18S). The 60S subunit contains about 49 different proteins and 3 molecules of RNA (25S, 5.8S and 5S).

The protein localises to the cytoplasm. The polypeptide is Small ribosomal subunit protein eS1B (Scheffersomyces stipitis (strain ATCC 58785 / CBS 6054 / NBRC 10063 / NRRL Y-11545) (Yeast)).